The chain runs to 107 residues: MARAALSAAPSNPRLLRVALLLLLLVAAGRRAAGASVATELRCQCLQTLQGIHPKNIQSVNVKSPGPHCAQTEVIATLKNGRKACLNPASPIVKKIIEKMLNSDKSN.

Positions 1–34 (MARAALSAAPSNPRLLRVALLLLLLVAAGRRAAG) are cleaved as a signal peptide. 2 cysteine pairs are disulfide-bonded: C43/C69 and C45/C85.

This sequence belongs to the intercrine alpha (chemokine CxC) family. Post-translationally, N-terminal processed forms GRO-alpha(4-73), GRO-alpha(5-73) and GRO-alpha(6-73) are produced by proteolytic cleavage after secretion from peripheral blood monocytes.

The protein localises to the secreted. Has chemotactic activity for neutrophils. May play a role in inflammation and exerts its effects on endothelial cells in an autocrine fashion. In vitro, the processed forms GRO-alpha(4-73), GRO-alpha(5-73) and GRO-alpha(6-73) show a 30-fold higher chemotactic activity. This Homo sapiens (Human) protein is Growth-regulated alpha protein (CXCL1).